The following is a 373-amino-acid chain: Methionine import ATP-binding protein MetN 1 (373 aa).

Residues 29-270 (ILIDRVRKVY…PRHEVTRRFV (242 aa)) form the ABC transporter domain. 67-74 (GRSGAGKS) contributes to the ATP binding site.

This sequence belongs to the ABC transporter superfamily. Methionine importer (TC 3.A.1.24) family. In terms of assembly, the complex is composed of two ATP-binding proteins (MetN), two transmembrane proteins (MetI) and a solute-binding protein (MetQ).

The protein localises to the cell inner membrane. The enzyme catalyses L-methionine(out) + ATP + H2O = L-methionine(in) + ADP + phosphate + H(+). It catalyses the reaction D-methionine(out) + ATP + H2O = D-methionine(in) + ADP + phosphate + H(+). In terms of biological role, part of the ABC transporter complex MetNIQ involved in methionine import. Responsible for energy coupling to the transport system. This chain is Methionine import ATP-binding protein MetN 1, found in Rhodopseudomonas palustris (strain ATCC BAA-98 / CGA009).